The primary structure comprises 288 residues: Pyridoxal kinase PdxY (288 aa).

Substrate is bound by residues Ser12 and 47 to 48; that span reads TQ. Residues Asp114, Glu151, Lys184, and 211-214 contribute to the ATP site; that span reads RPLL. Asp225 contacts substrate.

It belongs to the pyridoxine kinase family. PdxY subfamily. In terms of assembly, homodimer. Requires Mg(2+) as cofactor.

It carries out the reaction pyridoxal + ATP = pyridoxal 5'-phosphate + ADP + H(+). It participates in cofactor metabolism; pyridoxal 5'-phosphate salvage; pyridoxal 5'-phosphate from pyridoxal: step 1/1. Functionally, pyridoxal kinase involved in the salvage pathway of pyridoxal 5'-phosphate (PLP). Catalyzes the phosphorylation of pyridoxal to PLP. The polypeptide is Pyridoxal kinase PdxY (Pseudomonas aeruginosa (strain UCBPP-PA14)).